The following is a 303-amino-acid chain: uncharacterized protein (303 aa).

6 consecutive transmembrane segments (helical) span residues 12–32 (GLPI…SGIL), 81–101 (ISSV…VLEF), 117–137 (ALAG…FDVI), 174–194 (CIAM…TCMS), 208–228 (IISG…LDVV), and 265–286 (FFKG…SWAA). Solcar repeat units follow at residues 17–105 (SPMY…FKSK), 111–195 (DRPL…CMSF), and 206–293 (SHII…GKEI).

It belongs to the mitochondrial carrier (TC 2.A.29) family.

The protein localises to the mitochondrion inner membrane. This is an uncharacterized protein from Schizosaccharomyces pombe (strain 972 / ATCC 24843) (Fission yeast).